Consider the following 130-residue polypeptide: Small ribosomal subunit protein uS9 (130 aa).

The interval 108–130 is disordered; it reads SREVERKKVGLRKARKRPQYSKR. Positions 116–130 are enriched in basic residues; the sequence is VGLRKARKRPQYSKR.

The protein belongs to the universal ribosomal protein uS9 family.

This is Small ribosomal subunit protein uS9 from Cellvibrio japonicus (strain Ueda107) (Pseudomonas fluorescens subsp. cellulosa).